The chain runs to 390 residues: Probable protein phosphatase 2C 30 (390 aa).

The segment covering 1–10 (MQLSKNPIKQ) has biased composition (polar residues). Disordered regions lie at residues 1-20 (MQLS…NYTD) and 40-85 (PPLV…DSET). Positions 44 to 61 (FSPTSVKTPLSSPRSSPP) are enriched in low complexity. Residues 128–385 (YYSVYCKRGR…DDISLIIIQL (258 aa)) enclose the PPM-type phosphatase domain. Residues Asp-166, Gly-167, Asp-331, and Asp-376 each contribute to the Mn(2+) site.

This sequence belongs to the PP2C family. It depends on Mg(2+) as a cofactor. Mn(2+) serves as cofactor.

The catalysed reaction is O-phospho-L-seryl-[protein] + H2O = L-seryl-[protein] + phosphate. It catalyses the reaction O-phospho-L-threonyl-[protein] + H2O = L-threonyl-[protein] + phosphate. The protein is Probable protein phosphatase 2C 30 (PP2C5) of Arabidopsis thaliana (Mouse-ear cress).